The chain runs to 227 residues: UPF0173 metal-dependent hydrolase BCB4264_A4722 (227 aa).

The protein belongs to the UPF0173 family.

The protein is UPF0173 metal-dependent hydrolase BCB4264_A4722 of Bacillus cereus (strain B4264).